Reading from the N-terminus, the 484-residue chain is UDP-N-acetylmuramoyl-L-alanyl-D-glutamate--L-lysine ligase (484 aa).

Residue S43 coordinates UDP-N-acetyl-alpha-D-muramoyl-L-alanyl-D-glutamate. ATP is bound at residue 119–125; it reads GTKGKTT. Residues 161–162, S188, and R196 each bind UDP-N-acetyl-alpha-D-muramoyl-L-alanyl-D-glutamate; that span reads TT. An N6-carboxylysine modification is found at K230. The short motif at 405–408 is the L-lysine recognition motif element; it reads DDPN.

The protein belongs to the MurCDEF family. MurE subfamily. In terms of processing, carboxylation is probably crucial for Mg(2+) binding and, consequently, for the gamma-phosphate positioning of ATP.

The protein localises to the cytoplasm. The enzyme catalyses UDP-N-acetyl-alpha-D-muramoyl-L-alanyl-D-glutamate + L-lysine + ATP = UDP-N-acetyl-alpha-D-muramoyl-L-alanyl-gamma-D-glutamyl-L-lysine + ADP + phosphate + H(+). It functions in the pathway cell wall biogenesis; peptidoglycan biosynthesis. Functionally, catalyzes the addition of L-lysine to the nucleotide precursor UDP-N-acetylmuramoyl-L-alanyl-D-glutamate (UMAG) in the biosynthesis of bacterial cell-wall peptidoglycan. The sequence is that of UDP-N-acetylmuramoyl-L-alanyl-D-glutamate--L-lysine ligase from Streptococcus agalactiae serotype III (strain NEM316).